Consider the following 326-residue polypeptide: Fructose operon regulatory protein (326 aa).

Residues 1 to 58 enclose the HTH lacI-type domain; that stretch reads MTLDEIAKLAGVSKTTASYVINGKAQKYRISEKTQHKVMAVVEQYNFRPDHAASALRA. The H-T-H motif DNA-binding region spans 3 to 22; the sequence is LDEIAKLAGVSKTTASYVIN.

As to quaternary structure, homodimer.

Its activity is regulated as follows. Interaction with F1P may induce a structural change in the DNA spacer region between the -35 and -10 elements, thereby facilitating RNAP binding to the promoter to trigger the transcriptional activation of the fru operon. Interaction with F1P does not release FruR from its binding sequence. Its function is as follows. Regulates the expression of the fruBKA (fru) operon, which encodes proteins involved in the import and metabolism of fructose. In the absence of fructose 1-phosphate (F1P), binds to the promoter region of fruB, interferes with the binding of the RNA polymerase (RNAP) to the promoter and represses the expression of the operon. In the presence of F1P, activates the transcription of the fru operon by facilitating the binding of RNAP to the promoter. Essential for the expression of the fru operon and thus for growth on fructose. The protein is Fructose operon regulatory protein of Vibrio cholerae serotype O1 (strain ATCC 39315 / El Tor Inaba N16961).